We begin with the raw amino-acid sequence, 376 residues long: DNA-directed RNA polymerase subunit alpha (376 aa).

An alpha N-terminal domain (alpha-NTD) region spans residues 1–259; it reads MSDNSQNLLY…KHFSIFEKMD (259 aa). The tract at residues 276–376 is alpha C-terminal domain (alpha-CTD); it reads KDDILHKLVL…EKIRSKNVKG (101 aa).

Belongs to the RNA polymerase alpha chain family. Homodimer. The RNAP catalytic core consists of 2 alpha, 1 beta, 1 beta' and 1 omega subunit. When a sigma factor is associated with the core the holoenzyme is formed, which can initiate transcription.

The catalysed reaction is RNA(n) + a ribonucleoside 5'-triphosphate = RNA(n+1) + diphosphate. Functionally, DNA-dependent RNA polymerase catalyzes the transcription of DNA into RNA using the four ribonucleoside triphosphates as substrates. The sequence is that of DNA-directed RNA polymerase subunit alpha from Chlamydia felis (strain Fe/C-56) (Chlamydophila felis).